The following is a 450-amino-acid chain: Glutamyl-tRNA reductase (450 aa).

Residues 50–53, serine 109, 114–116, and glutamine 120 each bind substrate; these read TCNR and EPQ. The active-site Nucleophile is cysteine 51. Residue 189-194 coordinates NADP(+); the sequence is GAGEMA. A disordered region spans residues 422–450; that stretch reads NEPEQPEAHKNRKRPQPDLPAGCPGKTIL.

It belongs to the glutamyl-tRNA reductase family. As to quaternary structure, homodimer.

It carries out the reaction (S)-4-amino-5-oxopentanoate + tRNA(Glu) + NADP(+) = L-glutamyl-tRNA(Glu) + NADPH + H(+). The protein operates within porphyrin-containing compound metabolism; protoporphyrin-IX biosynthesis; 5-aminolevulinate from L-glutamyl-tRNA(Glu): step 1/2. Functionally, catalyzes the NADPH-dependent reduction of glutamyl-tRNA(Glu) to glutamate 1-semialdehyde (GSA). This Oleidesulfovibrio alaskensis (strain ATCC BAA-1058 / DSM 17464 / G20) (Desulfovibrio alaskensis) protein is Glutamyl-tRNA reductase.